The following is a 261-amino-acid chain: tRNA pseudouridine synthase A (261 aa).

Asp-51 functions as the Nucleophile in the catalytic mechanism. Residue Tyr-109 participates in substrate binding.

It belongs to the tRNA pseudouridine synthase TruA family. Homodimer.

The enzyme catalyses uridine(38/39/40) in tRNA = pseudouridine(38/39/40) in tRNA. Formation of pseudouridine at positions 38, 39 and 40 in the anticodon stem and loop of transfer RNAs. In Shewanella woodyi (strain ATCC 51908 / MS32), this protein is tRNA pseudouridine synthase A.